Consider the following 282-residue polypeptide: Bifunctional protein FolD (282 aa).

NADP(+) is bound by residues 165–167 (GAS) and Ile231.

Belongs to the tetrahydrofolate dehydrogenase/cyclohydrolase family. As to quaternary structure, homodimer.

The enzyme catalyses (6R)-5,10-methylene-5,6,7,8-tetrahydrofolate + NADP(+) = (6R)-5,10-methenyltetrahydrofolate + NADPH. It catalyses the reaction (6R)-5,10-methenyltetrahydrofolate + H2O = (6R)-10-formyltetrahydrofolate + H(+). It participates in one-carbon metabolism; tetrahydrofolate interconversion. Its function is as follows. Catalyzes the oxidation of 5,10-methylenetetrahydrofolate to 5,10-methenyltetrahydrofolate and then the hydrolysis of 5,10-methenyltetrahydrofolate to 10-formyltetrahydrofolate. The polypeptide is Bifunctional protein FolD (Francisella tularensis subsp. holarctica (strain FTNF002-00 / FTA)).